We begin with the raw amino-acid sequence, 240 residues long: Alkaline phosphatase synthesis transcriptional regulatory protein PhoP (240 aa).

Residues Lys4–Leu118 form the Response regulatory domain. Asp53 bears the 4-aspartylphosphate mark. Residues Glu136–Glu235 constitute a DNA-binding region (ompR/PhoB-type).

Phosphorylated by PhoR.

The protein resides in the cytoplasm. Its function is as follows. Member of the two-component regulatory system PhoP/PhoR involved in the regulation of alkaline phosphatase genes phoA and phoB and of phosphodiesterase. This is Alkaline phosphatase synthesis transcriptional regulatory protein PhoP (phoP) from Bacillus subtilis (strain 168).